The following is a 129-amino-acid chain: Large ribosomal subunit protein eL31 (129 aa).

A disordered region spans residues 1-46; that stretch reads MSQETTATKQEEQKTSELQQQKKEEQKPQQATTTTKEEKKTKPEKE. Composition is skewed to basic and acidic residues over residues 9-27 and 35-46; these read KQEE…EEQK and TKEEKKTKPEKE.

It belongs to the eukaryotic ribosomal protein eL31 family.

This is Large ribosomal subunit protein eL31 (rpl31e) from Sulfolobus acidocaldarius (strain ATCC 33909 / DSM 639 / JCM 8929 / NBRC 15157 / NCIMB 11770).